Here is a 278-residue protein sequence, read N- to C-terminus: Sulfur carrier protein FdhD (278 aa).

Cys121 functions as the Cysteine persulfide intermediate in the catalytic mechanism. Position 260–265 (260–265 (FCKPGR)) interacts with Mo-bis(molybdopterin guanine dinucleotide).

Belongs to the FdhD family.

The protein resides in the cytoplasm. Its function is as follows. Required for formate dehydrogenase (FDH) activity. Acts as a sulfur carrier protein that transfers sulfur from IscS to the molybdenum cofactor prior to its insertion into FDH. The protein is Sulfur carrier protein FdhD of Salmonella choleraesuis (strain SC-B67).